The primary structure comprises 294 residues: Glycine--tRNA ligase alpha subunit (294 aa).

The protein belongs to the class-II aminoacyl-tRNA synthetase family. Tetramer of two alpha and two beta subunits.

The protein resides in the cytoplasm. It catalyses the reaction tRNA(Gly) + glycine + ATP = glycyl-tRNA(Gly) + AMP + diphosphate. The polypeptide is Glycine--tRNA ligase alpha subunit (Oleidesulfovibrio alaskensis (strain ATCC BAA-1058 / DSM 17464 / G20) (Desulfovibrio alaskensis)).